Here is a 397-residue protein sequence, read N- to C-terminus: Formate-dependent phosphoribosylglycinamide formyltransferase (397 aa).

Residues 21-22 and E81 each bind N(1)-(5-phospho-beta-D-ribosyl)glycinamide; that span reads EL. ATP-binding positions include R113, K154, 194 to 197, and E202; that span reads EEYV. The 196-residue stretch at 118 to 313 folds into the ATP-grasp domain; it reads KLAAEKVKVP…EFQIHVRSAL (196 aa). The Mg(2+) site is built by E272 and E284. N(1)-(5-phospho-beta-D-ribosyl)glycinamide is bound by residues D291, K361, and 368-369; that span reads RR.

Belongs to the PurK/PurT family. Homodimer.

It carries out the reaction N(1)-(5-phospho-beta-D-ribosyl)glycinamide + formate + ATP = N(2)-formyl-N(1)-(5-phospho-beta-D-ribosyl)glycinamide + ADP + phosphate + H(+). The protein operates within purine metabolism; IMP biosynthesis via de novo pathway; N(2)-formyl-N(1)-(5-phospho-D-ribosyl)glycinamide from N(1)-(5-phospho-D-ribosyl)glycinamide (formate route): step 1/1. In terms of biological role, involved in the de novo purine biosynthesis. Catalyzes the transfer of formate to 5-phospho-ribosyl-glycinamide (GAR), producing 5-phospho-ribosyl-N-formylglycinamide (FGAR). Formate is provided by PurU via hydrolysis of 10-formyl-tetrahydrofolate. In Sulfurisphaera tokodaii (strain DSM 16993 / JCM 10545 / NBRC 100140 / 7) (Sulfolobus tokodaii), this protein is Formate-dependent phosphoribosylglycinamide formyltransferase.